We begin with the raw amino-acid sequence, 142 residues long: Trafficking protein particle complex subunit 1 (142 aa).

It belongs to the TRAPP small subunits family. BET5 subfamily. Part of the multisubunit TRAPP (transport protein particle) complex.

The protein resides in the golgi apparatus. It is found in the cis-Golgi network. The protein localises to the endoplasmic reticulum. May play a role in vesicular transport from endoplasmic reticulum to Golgi. The chain is Trafficking protein particle complex subunit 1 (trappc1-1) from Dictyostelium discoideum (Social amoeba).